Consider the following 284-residue polypeptide: SF-assemblin (284 aa).

Residues 1-30 are disordered; sequence PTPSPEARVASRPFLDSPLPGSPRSGSPTG. Positions 1–38 are nonhelical region; the sequence is PTPSPEARVASRPFLDSPLPGSPRSGSPTGYITATKAI. The segment covering 17 to 30 has biased composition (low complexity); that stretch reads SPLPGSPRSGSPTG. Positions 39 to 284 are rod; sequence SAGKLEHVAE…QDGLRIVNNS (246 aa). Coiled coils occupy residues 56–102 and 239–268; these read EIEL…QIQV and LDEINNLKSAVQMEREERISEDDEIVQAVN.

The protein belongs to the SF-assemblin family. Consists of at least four isoforms including two phosphorylated.

Its subcellular location is the cytoplasm. It is found in the cytoskeleton. Functionally, major component of the striated microtubule-associated fibers (SMAFs; system-I-fibers). This Spermatozopsis similis (Green alga) protein is SF-assemblin.